Here is a 285-residue protein sequence, read N- to C-terminus: MTENKAENKQTEKTEKMEVNIIIISDSAGETAFNNAQAAAVQFPDAEVNYRRYPFIVNEKKLAATLEEIEQYPNLVIVYSMLDEKLQLPIIKFAREHKARYIDILSPIIEAISQTTHMKPTGLVGANHQLTNKYFNRISAMEFAVMYDDGKDPRGFLEADVVLLGVSRTSKTPLSLLLANKGLKVANLPLVPQTHIPNEIYQIDPTKIIGLTTDPQVLNRIRRQRMISYGMDPDTAYSNMDSINAELDSAMALYKKLGCFVINVAERSIEETAALIMNHLSYEED.

165–172 (GVSRTSKT) serves as a coordination point for ADP.

Belongs to the pyruvate, phosphate/water dikinase regulatory protein family. PDRP subfamily.

It carries out the reaction N(tele)-phospho-L-histidyl/L-threonyl-[pyruvate, phosphate dikinase] + ADP = N(tele)-phospho-L-histidyl/O-phospho-L-threonyl-[pyruvate, phosphate dikinase] + AMP + H(+). It catalyses the reaction N(tele)-phospho-L-histidyl/O-phospho-L-threonyl-[pyruvate, phosphate dikinase] + phosphate + H(+) = N(tele)-phospho-L-histidyl/L-threonyl-[pyruvate, phosphate dikinase] + diphosphate. In terms of biological role, bifunctional serine/threonine kinase and phosphorylase involved in the regulation of the pyruvate, phosphate dikinase (PPDK) by catalyzing its phosphorylation/dephosphorylation. The chain is Putative pyruvate, phosphate dikinase regulatory protein from Lactobacillus delbrueckii subsp. bulgaricus (strain ATCC 11842 / DSM 20081 / BCRC 10696 / JCM 1002 / NBRC 13953 / NCIMB 11778 / NCTC 12712 / WDCM 00102 / Lb 14).